Reading from the N-terminus, the 166-residue chain is Disulfide bond formation protein B (166 aa).

Over 1-10 (MGLNITNRQG) the chain is Cytoplasmic. A helical membrane pass occupies residues 11–27 (FLLVAAACAGAIGFALF). Residues 28-45 (AQYQLGEEPCPLCILQRI) are Periplasmic-facing. C37 and C40 are disulfide-bonded. Residues 46–62 (GVMAVGALALLAALHNP) traverse the membrane as a helical segment. Over 63 to 69 (GKTGAKV) the chain is Cytoplasmic. Residues 70–86 (WGGLMTLAALSGAGVSL) form a helical membrane-spanning segment. Over 87–143 (RQLWLQSLPADQVPQCGPGLEFLMESFPLWEVLSKVLKGSGECAAIQGRFLGMTMPF) the chain is Periplasmic. Residues C102 and C129 are joined by a disulfide bond. A helical membrane pass occupies residues 144-162 (WVAVFFAGVIVWTLWLVGR). Over 163 to 166 (RRRG) the chain is Cytoplasmic.

This sequence belongs to the DsbB family.

The protein resides in the cell inner membrane. Its function is as follows. Required for disulfide bond formation in some periplasmic proteins. Acts by oxidizing the DsbA protein. The chain is Disulfide bond formation protein B from Chromobacterium violaceum (strain ATCC 12472 / DSM 30191 / JCM 1249 / CCUG 213 / NBRC 12614 / NCIMB 9131 / NCTC 9757 / MK).